A 99-amino-acid chain; its full sequence is A-type ATP synthase subunit F (99 aa).

The protein belongs to the V-ATPase F subunit family. As to quaternary structure, has multiple subunits with at least A(3), B(3), C, D, E, F, H, I and proteolipid K(x).

Its subcellular location is the cell membrane. Its function is as follows. Component of the A-type ATP synthase that produces ATP from ADP in the presence of a proton gradient across the membrane. The sequence is that of A-type ATP synthase subunit F from Methanococcus maripaludis (strain C7 / ATCC BAA-1331).